A 397-amino-acid chain; its full sequence is Elongation factor Tu (397 aa).

Residues 10–207 (LPHVNVGTIG…TLDAYIPEPV (198 aa)) form the tr-type G domain. The G1 stretch occupies residues 19–26 (GHVDHGKT). Residue 19-26 (GHVDHGKT) coordinates GTP. Mg(2+) is bound at residue Thr26. Residues 60-64 (GITIN) are G2. The segment at 81–84 (DCPG) is G3. Residues 81–85 (DCPGH) and 136–139 (NKAD) contribute to the GTP site. The segment at 136–139 (NKAD) is G4. The segment at 174–176 (SAR) is G5.

Belongs to the TRAFAC class translation factor GTPase superfamily. Classic translation factor GTPase family. EF-Tu/EF-1A subfamily. As to quaternary structure, monomer.

It localises to the cytoplasm. The enzyme catalyses GTP + H2O = GDP + phosphate + H(+). Its function is as follows. GTP hydrolase that promotes the GTP-dependent binding of aminoacyl-tRNA to the A-site of ribosomes during protein biosynthesis. This chain is Elongation factor Tu, found in Pseudomonas entomophila (strain L48).